We begin with the raw amino-acid sequence, 329 residues long: Lipoyl synthase (329 aa).

[4Fe-4S] cluster-binding residues include cysteine 55, cysteine 60, cysteine 66, cysteine 81, cysteine 85, cysteine 88, and serine 292. The 215-residue stretch at 67 to 281 (WEDREATFLI…KAEAEAIGFL (215 aa)) folds into the Radical SAM core domain.

It belongs to the radical SAM superfamily. Lipoyl synthase family. [4Fe-4S] cluster serves as cofactor.

It is found in the cytoplasm. The catalysed reaction is [[Fe-S] cluster scaffold protein carrying a second [4Fe-4S](2+) cluster] + N(6)-octanoyl-L-lysyl-[protein] + 2 oxidized [2Fe-2S]-[ferredoxin] + 2 S-adenosyl-L-methionine + 4 H(+) = [[Fe-S] cluster scaffold protein] + N(6)-[(R)-dihydrolipoyl]-L-lysyl-[protein] + 4 Fe(3+) + 2 hydrogen sulfide + 2 5'-deoxyadenosine + 2 L-methionine + 2 reduced [2Fe-2S]-[ferredoxin]. It functions in the pathway protein modification; protein lipoylation via endogenous pathway; protein N(6)-(lipoyl)lysine from octanoyl-[acyl-carrier-protein]: step 2/2. Its function is as follows. Catalyzes the radical-mediated insertion of two sulfur atoms into the C-6 and C-8 positions of the octanoyl moiety bound to the lipoyl domains of lipoate-dependent enzymes, thereby converting the octanoylated domains into lipoylated derivatives. In Clavibacter sepedonicus (Clavibacter michiganensis subsp. sepedonicus), this protein is Lipoyl synthase.